Here is a 1027-residue protein sequence, read N- to C-terminus: D-2-hydroxyglutarate dehydrogenase (1027 aa).

The 237-residue stretch at 48 to 284 (YQQLPQAILF…CEAKLNLLLI (237 aa)) folds into the FAD-binding PCMH-type domain. (R)-2-hydroxyglutarate-binding residues include arginine 405 and histidine 503. One can recognise a 4Fe-4S ferredoxin-type domain in the interval 665-696 (HEVKAAMDTCLACKACASQCPIKIDVPSFRAK). Positions 674, 677, 680, and 684 each coordinate [4Fe-4S] cluster.

The protein in the N-terminal section; belongs to the FAD-binding oxidoreductase/transferase type 4 family. In terms of assembly, homotetramer. [4Fe-4S] cluster serves as cofactor. It depends on FAD as a cofactor.

The enzyme catalyses (R)-2-hydroxyglutarate + A = 2-oxoglutarate + AH2. Its function is as follows. Catalyzes the oxidation of D-2-hydroxyglutarate (D-2-HGA) to 2-oxoglutarate. Provides the way to recycle D-2-HGA produced during L-serine synthesis by SerA, by converting it back to 2-oxoglutarate. The physiological molecule that functions as the primary electron acceptor during D-2-HGA oxidation is unknown. The sequence is that of D-2-hydroxyglutarate dehydrogenase from Haemophilus influenzae (strain ATCC 51907 / DSM 11121 / KW20 / Rd).